A 227-amino-acid chain; its full sequence is Ion-translocating oxidoreductase complex subunit E (227 aa).

A run of 5 helical transmembrane segments spans residues 57-77, 89-109, 111-131, 146-166, and 200-220; these read LGLGLATLFVLLCTNVTISLF, IYVMVIATVVTAVQLLMNAFA, PVYQSLGIFIPLIVTNCIVIG, AFDGLATGLGMTLSLVLLGAI, and GLLLAILPPGAFIGLGLILAV.

Belongs to the NqrDE/RnfAE family. The complex is composed of six subunits: RnfA, RnfB, RnfC, RnfD, RnfE and RnfG.

The protein resides in the cell inner membrane. In terms of biological role, part of a membrane-bound complex that couples electron transfer with translocation of ions across the membrane. The protein is Ion-translocating oxidoreductase complex subunit E of Haemophilus ducreyi (strain 35000HP / ATCC 700724).